A 502-amino-acid polypeptide reads, in one-letter code: MWSALFSHLREVHKRSGVKEEKLIMKSPPAAGEAGCHKPQATATNKMTVLQSPLGLRTILTSLVAFFIVVSSVSLLFDRGQDAQAQLAVEQHQHQEVLLKQKPASAAVGEQKSVVVDQSSLRSQEAQVQWTSELQDVATDSGDGGFDGEEDCNWSLGRWVYDNASRPLYSGLKCSFIFDEVACDKYGRNDTKYQHWRWQPHGCNLPRFNATKFLEKLRNKRLVFVGDSVNRNQWVSMVCMVEHFIPDGRKMRVYNGSLISFKAFEYNATIDFYWSPLLLESNSDNPIIHRVEYRIIRADRIEKHANVWKDADFIVFNSYLWWRKQRDGMMMKVMYGSFEDGDAKLDEVQMVDGYEIALKKLTEYLGANINKNKTRIFFAGSSPAHSWASNWGGDDNNKCLNETEPIQIEDYRSATTDYGMMDKAKEIFGTLEPKGIHVQILNITQLSEYRKDAHPTIFRRQYVPLTKEQIANPSIYADCTHWCLPGVPDVWNEFLYAYIMHK.

Residues 1 to 53 lie on the Cytoplasmic side of the membrane; sequence MWSALFSHLREVHKRSGVKEEKLIMKSPPAAGEAGCHKPQATATNKMTVLQSP. Residues 54–76 traverse the membrane as a helical; Signal-anchor for type II membrane protein segment; it reads LGLRTILTSLVAFFIVVSSVSLL. The Lumenal segment spans residues 77–502; it reads FDRGQDAQAQ…EFLYAYIMHK (426 aa). 4 disulfides stabilise this stretch: Cys152-Cys203, Cys174-Cys239, Cys183-Cys483, and Cys399-Cys479. N-linked (GlcNAc...) asparagine glycans are attached at residues Asn153, Asn163, Asn189, and Asn209. A GDS motif motif is present at residues 226 to 228; it reads GDS. Residue Ser228 is the Nucleophile of the active site. Asn255, Asn267, Asn372, Asn401, and Asn442 each carry an N-linked (GlcNAc...) asparagine glycan. Asp478 functions as the Proton donor in the catalytic mechanism. The short motif at 478–481 is the DXXH motif element; that stretch reads DCTH. Catalysis depends on His481, which acts as the Proton acceptor.

Belongs to the PC-esterase family. TBL subfamily.

The protein resides in the golgi apparatus membrane. In terms of biological role, xylan acetyltransferase required for 2-O- and 3-O-monoacetylation of xylosyl residues in xylan. Catalyzes the 2-O-acetylation of xylan, followed by nonenzymatic acetyl migration to the O-3 position, resulting in products that are monoacetylated at both O-2 and O-3 positions. The protein is Xylan O-acetyltransferase 13 of Oryza sativa subsp. japonica (Rice).